The chain runs to 134 residues: Rubredoxin-2 (134 aa).

The Rubredoxin-like domain maps to 1-53 (MAKYQCPDCQYIYDECKGEPHEGFQPNTNWGEIPEEWACPDCAVRDKIDFKML). 4 residues coordinate Fe cation: Cys-6, Cys-9, Cys-39, and Cys-42. Basic and acidic residues predominate over residues 99–116 (SITDERENTPDNKVERRS). The segment at 99-134 (SITDERENTPDNKVERRSQSQAVRRSSVKKIKNNKR) is disordered. Residues 124–134 (SSVKKIKNNKR) show a composition bias toward basic residues.

The protein belongs to the rubredoxin family. It depends on Fe(3+) as a cofactor.

The protein resides in the cytoplasm. Its pathway is hydrocarbon metabolism; alkane degradation. In terms of biological role, involved in the hydrocarbon hydroxylating system, which transfers electrons from NADH to rubredoxin reductase and then through rubredoxin to alkane 1 monooxygenase. The chain is Rubredoxin-2 (alkF) from Pseudomonas putida (Arthrobacter siderocapsulatus).